Here is a 105-residue protein sequence, read N- to C-terminus: Small ribosomal subunit protein uS10 (105 aa).

This sequence belongs to the universal ribosomal protein uS10 family. Part of the 30S ribosomal subunit.

In terms of biological role, involved in the binding of tRNA to the ribosomes. In Rickettsia prowazekii (strain Madrid E), this protein is Small ribosomal subunit protein uS10.